The sequence spans 368 residues: Flagellar P-ring protein (368 aa).

Residues 1–22 (MLIPLARAVLALALLGAGAAHA) form the signal peptide.

This sequence belongs to the FlgI family. As to quaternary structure, the basal body constitutes a major portion of the flagellar organelle and consists of four rings (L,P,S, and M) mounted on a central rod.

The protein resides in the periplasm. It is found in the bacterial flagellum basal body. In terms of biological role, assembles around the rod to form the L-ring and probably protects the motor/basal body from shearing forces during rotation. This Bordetella bronchiseptica (strain ATCC BAA-588 / NCTC 13252 / RB50) (Alcaligenes bronchisepticus) protein is Flagellar P-ring protein.